A 100-amino-acid chain; its full sequence is Urease subunit gamma (100 aa).

Belongs to the urease gamma subunit family. In terms of assembly, heterotrimer of UreA (gamma), UreB (beta) and UreC (alpha) subunits. Three heterotrimers associate to form the active enzyme.

The protein resides in the cytoplasm. The enzyme catalyses urea + 2 H2O + H(+) = hydrogencarbonate + 2 NH4(+). It participates in nitrogen metabolism; urea degradation; CO(2) and NH(3) from urea (urease route): step 1/1. The protein is Urease subunit gamma of Laribacter hongkongensis (strain HLHK9).